Reading from the N-terminus, the 300-residue chain is B1 kinase (300 aa).

The 267-residue stretch at 16–282 (WVVGPLIGKG…ITMVNSLTYF (267 aa)) folds into the Protein kinase domain. ATP contacts are provided by residues 22–30 (IGKGGFGSI) and Lys45. Asn147 serves as the catalytic Proton acceptor.

Belongs to the protein kinase superfamily. Ser/Thr protein kinase family. Poxviruses subfamily. In terms of assembly, interacts with host JIP1; this interaction increases the amount of MAPK bound to JIP1 and subsequently increases the activity of transcription factors, such as JUN, that respond to these complexes. Interacts with protein OPG198; this interaction inhibits the repressive activity of OPG198 pseudokinase on viral replication factory formation. Mg(2+) is required as a cofactor. Post-translationally, autophosphorylated.

The protein localises to the virion. Its subcellular location is the host cytoplasm. It catalyses the reaction L-seryl-[protein] + ATP = O-phospho-L-seryl-[protein] + ADP + H(+). It carries out the reaction L-threonyl-[protein] + ATP = O-phospho-L-threonyl-[protein] + ADP + H(+). Its function is as follows. Essential serine/threonine-protein kinase that plays different role in the viral life cycle. Phosphorylates the host small ribosomal protein RACK1 thereby customizing the ribosomes to a state optimal for viral mRNAs (which contain poly-A leaders) but not for host mRNAs. Facilitates viral DNA replication by inhibiting host BANF1, a cellular host defense responsive to foreign DNA. Phosphorylates host BANF1 on serine and threonine residues; this leads to BANF1 relocalization to the cytoplasm, loss of dimerization and impaired DNA binding activity. Indeed, BANF1 activity depends on its DNA-binding property which is blocked by VPK1-mediated phosphorylation. Required for viral intermediate genes expression, probably by inhibiting host BANF1. Modulates cellular responses via host JUN by two different mechanisms, either by direct phosphorylation or by modulation of upstream JIP1-MAPK complexes. Seems to participate in the accumulation/processing of late proteins and thus in virion maturation. In addition, inhibits B12 repressive activity on viral DNA replication via a phosphorylation-dependent mechanism. This Homo sapiens (Human) protein is B1 kinase (OPG187).